Consider the following 588-residue polypeptide: Phosphatidylinositol-3,5-bisphosphate 3-phosphatase mtm-1 (588 aa).

One can recognise a GRAM domain in the interval 20-91 (IQESIDLKLL…GQVSRIEKVG (72 aa)). Residues 164–543 (GWKIYSAEKE…CGLHVWIDYY (380 aa)) enclose the Myotubularin phosphatase domain. 3 residues coordinate a 1,2-diacyl-sn-glycero-3-phospho-(1D-myo-inositol-3,5-bisphosphate): N293, N316, and I317. A 1,2-diacyl-sn-glycero-3-phospho-(1D-myo-inositol-3-phosphate) is bound by residues N293, N316, and I317. Residue C378 is the Phosphocysteine intermediate of the active site. The a 1,2-diacyl-sn-glycero-3-phospho-(1D-myo-inositol-3,5-bisphosphate) site is built by S379, D380, G381, W382, D383, R384, K420, and R424. 6 residues coordinate a 1,2-diacyl-sn-glycero-3-phospho-(1D-myo-inositol-3-phosphate): S379, D380, G381, W382, D383, and R384. Residue S379 coordinates phosphate. Residues G381, W382, D383, and R384 each contribute to the phosphate site. Position 424 (R424) interacts with a 1,2-diacyl-sn-glycero-3-phospho-(1D-myo-inositol-3-phosphate). Residues 563–588 (AQFVDEKKQLLDEIMALDDAAQKLTA) adopt a coiled-coil conformation.

It belongs to the protein-tyrosine phosphatase family. Non-receptor class myotubularin subfamily. In terms of tissue distribution, expressed in embryo, larva and in adults. Expressed in a few head and tail neurons. Expressed in hypodermis, body wall and pharyngeal muscles, sheath cells, vulva, distal tip cells and coelomocytes.

The protein resides in the cell membrane. The protein localises to the cell projection. It localises to the phagocytic cup. Its subcellular location is the apical cell membrane. It is found in the cytoplasmic granule membrane. It catalyses the reaction a 1,2-diacyl-sn-glycero-3-phospho-(1D-myo-inositol-3,5-bisphosphate) + H2O = a 1,2-diacyl-sn-glycero-3-phospho-(1D-myo-inositol-5-phosphate) + phosphate. It carries out the reaction a 1,2-diacyl-sn-glycero-3-phospho-(1D-myo-inositol-3-phosphate) + H2O = a 1,2-diacyl-sn-glycero-3-phospho-(1D-myo-inositol) + phosphate. The catalysed reaction is 1,2-dioctanoyl-sn-glycero-3-phospho-(1-D-myo-inositol-3-phosphate) + H2O = 1,2-dioctanoyl-sn-glycero-3-phospho-(1D-myo-inositol) + phosphate. Its function is as follows. Lipid phosphatase that specifically dephosphorylates phosphatidylinositol 3-phosphate (PI3P) and phosphatidylinositol 3,5-bisphosphate (PI(3,5)P2). Negatively regulates accumulation of PI3P on intracellular vesicles. Negatively regulates phagocytosis of apoptotic cells probably by limiting the recruitment and/or the activation of ced-5, ced-2 and ced-12 complex. In addition, may positively regulate phagosome maturation by promoting recycling of apoptotic receptor ced-1 back to the plasma membrane. Essential for embryonic and larval development. May promote migration of distal tip cells. The protein is Phosphatidylinositol-3,5-bisphosphate 3-phosphatase mtm-1 of Caenorhabditis elegans.